Reading from the N-terminus, the 265-residue chain is uncharacterized protein (265 aa).

Residues 3-23 form a helical; Signal-anchor for type II membrane protein membrane-spanning segment; it reads KKTWVYIIIAIIIILLLVWYF. 2 N-linked (GlcNAc...) asparagine; by host glycosylation sites follow: asparagine 37 and asparagine 125. The stretch at 37 to 94 forms a coiled coil; it reads NQTYNMLQQQISSLNQQILFLKQQISNLHVPAPTSTVNSLRQTVSDINQQVSTINNQI. Residues 158–257 are a coiled coil; sequence NVADNELNVL…KNSLGSAVRN (100 aa).

It is found in the host membrane. The protein localises to the virion. This is an uncharacterized protein from Acanthamoeba polyphaga (Amoeba).